The following is a 359-amino-acid chain: Serine/threonine-protein kinase SAPK7 (359 aa).

Positions 4 to 260 (YELLKDIGAG…IREIRNHPWF (257 aa)) constitute a Protein kinase domain. ATP is bound by residues 10-18 (IGAGNFGVA) and lysine 33. The active-site Proton acceptor is the aspartate 123. Positions 299 to 359 (EEARTPPRSS…VHASGEFQLS (61 aa)) are disordered. The span at 331 to 343 (EEQEEEEDAEDEY) shows a compositional bias: acidic residues.

This sequence belongs to the protein kinase superfamily. Ser/Thr protein kinase family. In terms of processing, may be phosphorylated. As to expression, weakly expressed in roots. Expressed in roots of young seedlings.

It is found in the cytoplasm. The protein resides in the nucleus. It carries out the reaction L-seryl-[protein] + ATP = O-phospho-L-seryl-[protein] + ADP + H(+). It catalyses the reaction L-threonyl-[protein] + ATP = O-phospho-L-threonyl-[protein] + ADP + H(+). With respect to regulation, activated by hyperosmotic stress. Functionally, may play a role in signal transduction of hyperosmotic response. The sequence is that of Serine/threonine-protein kinase SAPK7 (SAPK7) from Oryza sativa subsp. japonica (Rice).